Here is a 107-residue protein sequence, read N- to C-terminus: UPF0145 protein BVU_2335 (107 aa).

This sequence belongs to the UPF0145 family.

In Phocaeicola vulgatus (strain ATCC 8482 / DSM 1447 / JCM 5826 / CCUG 4940 / NBRC 14291 / NCTC 11154) (Bacteroides vulgatus), this protein is UPF0145 protein BVU_2335.